The following is a 276-amino-acid chain: MGQKVHPYSLRIKINRDWKSKWYFDKKLYSEILHEDFLIRRETMKFFKGIRFDISDIEIIRNNLQRVTVVVSTPRPGSVIGVKGANLEKIGQLLTRKISKKINIKIKEIKKPEFDAQIVANGIAKQLENRASYRKLLKSSLLSSISKGVQGVKIKVSGRLGGAEIARSFEVKEGRVPLHTLRANIDYGFAEAQTTYGVIGVKVWLFKGEVLGKQTNSDAGQVINRKSSREKSEHFDRSRVDDRGRKVLNDDKFSKEKLELGSKSNNDFKKKNGSDV.

One can recognise a KH type-2 domain in the interval 39 to 110; the sequence is IRRETMKFFK…KINIKIKEIK (72 aa). The disordered stretch occupies residues 218–243; that stretch reads DAGQVINRKSSREKSEHFDRSRVDDR. Over residues 227–243 the composition is skewed to basic and acidic residues; sequence SSREKSEHFDRSRVDDR.

This sequence belongs to the universal ribosomal protein uS3 family. As to quaternary structure, part of the 30S ribosomal subunit. Forms a tight complex with proteins S10 and S14.

Functionally, binds the lower part of the 30S subunit head. Binds mRNA in the 70S ribosome, positioning it for translation. This chain is Small ribosomal subunit protein uS3, found in Borrelia hermsii (strain HS1 / DAH).